The sequence spans 239 residues: tRNA (guanine-N(7)-)-methyltransferase (239 aa).

Positions 68, 93, 120, and 143 each coordinate S-adenosyl-L-methionine. The active site involves Asp-143. Residues Lys-147, Asp-180, and 217–220 contribute to the substrate site; that span reads TKFE.

This sequence belongs to the class I-like SAM-binding methyltransferase superfamily. TrmB family.

It catalyses the reaction guanosine(46) in tRNA + S-adenosyl-L-methionine = N(7)-methylguanosine(46) in tRNA + S-adenosyl-L-homocysteine. It participates in tRNA modification; N(7)-methylguanine-tRNA biosynthesis. Functionally, catalyzes the formation of N(7)-methylguanine at position 46 (m7G46) in tRNA. This chain is tRNA (guanine-N(7)-)-methyltransferase, found in Vibrio cholerae serotype O1 (strain ATCC 39315 / El Tor Inaba N16961).